Here is a 279-residue protein sequence, read N- to C-terminus: Phenylalanine 3-hydroxylase (279 aa).

Fe cation contacts are provided by H140, H145, and E186.

It belongs to the biopterin-dependent aromatic amino acid hydroxylase family. Fe(2+) serves as cofactor.

The enzyme catalyses (6R)-L-erythro-5,6,7,8-tetrahydrobiopterin + L-phenylalanine + O2 = 3-hydroxy-L-phenylalanine + (4aS,6R)-4a-hydroxy-L-erythro-5,6,7,8-tetrahydrobiopterin. Its function is as follows. In vitro, catalyzes the highly regiospecific C-3 hydroxylation of L-phenylalanine (L-Phe) to yield 3-hydroxy-L-phenylalanine (meta-Tyr), an amino acid found in bacterial secondary metabolites such as sanglifehrin A and some pacidamycins. Tetrahydrobiopterin (BH4) seems to be the physiological pterin, however the hydroxylase is also able to use 6-methyltetrahydropterin (6-MePH4). The sequence is that of Phenylalanine 3-hydroxylase from Streptomyces coeruleorubidus.